Here is a 481-residue protein sequence, read N- to C-terminus: Guanine nucleotide exchange factor C9orf72 homolog (481 aa).

One can recognise a uDENN C9ORF72-type domain in the interval 23–194; sequence SPLLAATFAY…ELLASMRSHS (172 aa). The cDENN C9ORF72-type domain maps to 200–343; that stretch reads DIADTVLNDD…SELTAFWRAT (144 aa). The region spanning 370 to 464 is the dDENN C9ORF72-type domain; it reads VLHRDTLVKA…IKPGLHSFIF (95 aa). The segment at 461 to 481 is required for the homodimerization of the C9orf72-SMCR8 complex; the sequence is SFIFGRPFYTSVQERDVLMTF.

As to quaternary structure, component of the C9orf72-SMCR8 complex, at least composed of C9orf72, SMCR8 and WDR41. The complex is formed of two protomers, each individually consisting of one molecule each of C9orf72, SMCR8 and WDR41. The protomers homodimerize via an interaction between C9orf72 (via C-terminus) and SMCR8 (via N-terminus). Within each protomer SMCR8 (via DENN domain) acts as a bridging protein between WDR41 (via C-terminus and N-terminus) and C9orf72 (via C-terminus). The C9orf72-SMCR8 complex associates with the ULK1/ATG1 kinase complex. Interacts with ULK1/ATG1 kinase complex members ULK1, ATG13 and RB1CC1. Interacts with SMCR8; the interaction is direct. Interacts with HNRNPA1, HNRNPA2B1 and UBQLN2. Interacts with small Rab GTPase RAB1A; the interaction mediates recruitment of RAB1A to the ULK1/ATG1 kinase complex. Also interacts with small Rab GTPase RAB7A. Interacts with cofilin. Interacts with GTP-binding proteins ARF1 and ARF6. Interacts with the DLG4/PSD-95. Interacts with CARM1 (via PH domain-like fold). Interacts with RAB39A and RAB39B (in GDP-bound forms); functions as GEF for RAB39A and RAB39B.

It localises to the nucleus. Its subcellular location is the cytoplasm. It is found in the P-body. The protein resides in the stress granule. The protein localises to the endosome. It localises to the lysosome. Its subcellular location is the cytoplasmic vesicle. It is found in the autophagosome. The protein resides in the autolysosome. The protein localises to the secreted. It localises to the cell projection. Its subcellular location is the axon. It is found in the growth cone. The protein resides in the perikaryon. In terms of biological role, acts as a guanine-nucleotide releasing factor (GEF) for Rab GTPases by promoting the conversion of inactive RAB-GDP to the active form RAB-GTP. Acts as a GEF for RAB39A which enables HOPS-mediated autophagosome-lysosome membrane tethering and fusion in mammalian autophagy. Component of the C9orf72-SMCR8 complex where both subunits display GEF activity and that regulates autophagy. As part of the C9orf72-SMCR8-WDR41 (CSW) complex, functions as GEF for RAB8A and RAB39B, thereby promoting autophagosome maturation. As part of the C9orf72-SMCR8 complex, also functions as GTPase activating protein (GAP) for RAB8A and RAB11A in vitro. The C9orf72-SMCR8 complex also acts as a regulator of autophagy initiation by interacting with the ULK1/ATG1 kinase complex and modulating its protein kinase activity. Promotes initiation of autophagy by regulating the RAB1A-dependent trafficking of the ULK1/ATG1 kinase complex to the phagophore which leads to autophagosome formation. Acts as a regulator of mTORC1 signaling by promoting phosphorylation of mTORC1 substrates. Plays a role in endosomal trafficking. May be involved in regulating the maturation of phagosomes to lysosomes. Promotes the lysosomal localization and lysosome-mediated degradation of CARM1 which leads to inhibition of starvation-induced lipid metabolism. Regulates actin dynamics in motor neurons by inhibiting the GTP-binding activity of ARF6, leading to ARF6 inactivation. This reduces the activity of the LIMK1 and LIMK2 kinases which are responsible for phosphorylation and inactivation of cofilin, leading to CFL1/cofilin activation. Positively regulates axon extension and axon growth cone size in spinal motor neurons. Required for SMCR8 protein expression and localization at pre- and post-synaptic compartments in the forebrain, also regulates protein abundance of RAB3A and GRIA1/GLUR1 in post-synaptic compartments in the forebrain and hippocampus. Plays a role within the hematopoietic system in restricting inflammation and the development of autoimmunity. This Rattus norvegicus (Rat) protein is Guanine nucleotide exchange factor C9orf72 homolog.